The sequence spans 256 residues: Thiazole synthase (256 aa).

The active-site Schiff-base intermediate with DXP is the lysine 95. Residues glycine 156, 182-183 (AG), and 204-205 (NT) contribute to the 1-deoxy-D-xylulose 5-phosphate site.

The protein belongs to the ThiG family. Homotetramer. Forms heterodimers with either ThiH or ThiS.

It is found in the cytoplasm. It catalyses the reaction [ThiS sulfur-carrier protein]-C-terminal-Gly-aminoethanethioate + 2-iminoacetate + 1-deoxy-D-xylulose 5-phosphate = [ThiS sulfur-carrier protein]-C-terminal Gly-Gly + 2-[(2R,5Z)-2-carboxy-4-methylthiazol-5(2H)-ylidene]ethyl phosphate + 2 H2O + H(+). It functions in the pathway cofactor biosynthesis; thiamine diphosphate biosynthesis. In terms of biological role, catalyzes the rearrangement of 1-deoxy-D-xylulose 5-phosphate (DXP) to produce the thiazole phosphate moiety of thiamine. Sulfur is provided by the thiocarboxylate moiety of the carrier protein ThiS. In vitro, sulfur can be provided by H(2)S. This is Thiazole synthase from Escherichia coli O6:H1 (strain CFT073 / ATCC 700928 / UPEC).